Consider the following 116-residue polypeptide: MTRVSLLWAVVVSTCLESGMAQTVTQSQPEMSVQEAETVTLSCTYDTSENNYYLFWYKQPPSRQMILVIRQEAYKQQNATENRFSVNFQKAAKSFSLKISDSQLGDTAMYFCAFMK.

Positions 1–21 are cleaved as a signal peptide; sequence MTRVSLLWAVVVSTCLESGMA. An Ig-like domain is found at 22–116; that stretch reads QTVTQSQPEM…TAMYFCAFMK (95 aa). The cysteines at positions 43 and 112 are disulfide-linked. Residue Asn78 is glycosylated (N-linked (GlcNAc...) asparagine).

In terms of assembly, alpha-beta TR is a heterodimer composed of an alpha and beta chain; disulfide-linked. The alpha-beta TR is associated with the transmembrane signaling CD3 coreceptor proteins to form the TR-CD3 (TcR or TCR). The assembly of alpha-beta TR heterodimers with CD3 occurs in the endoplasmic reticulum where a single alpha-beta TR heterodimer associates with one CD3D-CD3E heterodimer, one CD3G-CD3E heterodimer and one CD247 homodimer forming a stable octameric structure. CD3D-CD3E and CD3G-CD3E heterodimers preferentially associate with TR alpha and TR beta chains, respectively. The association of the CD247 homodimer is the last step of TcR assembly in the endoplasmic reticulum and is required for transport to the cell surface.

The protein localises to the cell membrane. Its function is as follows. V region of the variable domain of T cell receptor (TR) alpha chain that participates in the antigen recognition. Alpha-beta T cell receptors are antigen specific receptors which are essential to the immune response and are present on the cell surface of T lymphocytes. Recognize peptide-major histocompatibility (MH) (pMH) complexes that are displayed by antigen presenting cells (APC), a prerequisite for efficient T cell adaptive immunity against pathogens. Binding of alpha-beta TR to pMH complex initiates TR-CD3 clustering on the cell surface and intracellular activation of LCK that phosphorylates the ITAM motifs of CD3G, CD3D, CD3E and CD247 enabling the recruitment of ZAP70. In turn ZAP70 phosphorylates LAT, which recruits numerous signaling molecules to form the LAT signalosome. The LAT signalosome propagates signal branching to three major signaling pathways, the calcium, the mitogen-activated protein kinase (MAPK) kinase and the nuclear factor NF-kappa-B (NF-kB) pathways, leading to the mobilization of transcription factors that are critical for gene expression and essential for T cell growth and differentiation. The T cell repertoire is generated in the thymus, by V-(D)-J rearrangement. This repertoire is then shaped by intrathymic selection events to generate a peripheral T cell pool of self-MH restricted, non-autoaggressive T cells. Post-thymic interaction of alpha-beta TR with the pMH complexes shapes TR structural and functional avidity. This Homo sapiens (Human) protein is T cell receptor alpha variable 38-1.